A 750-amino-acid chain; its full sequence is Catalase-peroxidase (750 aa).

The segment at residues 112-235 is a cross-link (tryptophyl-tyrosyl-methioninium (Trp-Tyr) (with M-261)); it reads WHSAGTYRIG…LGAAHMGLIY (124 aa). His-113 (proton acceptor) is an active-site residue. A cross-link (tryptophyl-tyrosyl-methioninium (Tyr-Met) (with W-112)) is located at residues 235–261; sequence YVNPEGHNGNPDPVEAASYIRETFGRM. A heme b-binding site is contributed by His-276.

Belongs to the peroxidase family. Peroxidase/catalase subfamily. As to quaternary structure, homodimer or homotetramer. Heme b is required as a cofactor. Post-translationally, formation of the three residue Trp-Tyr-Met cross-link is important for the catalase, but not the peroxidase activity of the enzyme.

The catalysed reaction is H2O2 + AH2 = A + 2 H2O. It carries out the reaction 2 H2O2 = O2 + 2 H2O. In terms of biological role, bifunctional enzyme with both catalase and broad-spectrum peroxidase activity. This chain is Catalase-peroxidase, found in Christiangramia forsetii (strain DSM 17595 / CGMCC 1.15422 / KT0803) (Gramella forsetii).